Reading from the N-terminus, the 573-residue chain is Oxygen sensor histidine kinase response regulator DosT (573 aa).

2 consecutive GAF domains span residues 61–198 (KLDA…GIAV) and 229–366 (DPAM…ALAW). Residue His-147 coordinates heme. Residues 380–573 (ILTDRDRIAR…TLLRWSAPLR (194 aa)) form the Histidine kinase domain. A Phosphohistidine; by autocatalysis modification is found at His-392.

Requires Mg(2+) as cofactor. The cofactor is heme.

It is found in the cytoplasm. Functionally, interacts with the two-component regulatory system DevR/DevS (DosR/DosS) involved in onset of the dormancy response. Required for full induction of the DevR (DosR) regulon; required during early adaptation to anaerobiosis, to start induction of the DevR regulon. May act as a direct hypoxia/oxygen sensor. May be the secondary sensor for CO. Donates a phosphate group to DevR (DosR). This Mycobacterium tuberculosis (strain CDC 1551 / Oshkosh) protein is Oxygen sensor histidine kinase response regulator DosT (dosT).